Here is a 290-residue protein sequence, read N- to C-terminus: MTGHAPLVGVIGGSGLYKLEGIEPVESLNIDTPWGRPSSPITLFKLPSGPVVAFLARHGVSHQFTPSEVPSRANIAALKKIGCQVIIAFSAVGSLREEIKPRDIVVPSQIIDRTKSAHAMFGEPFDTELTGLVTKSIKEAVTGFEMNDRIGVHAEKVAICMEGPAFSTRAESNMYRMFGGDIINMSVLPEAKLAREAELSYALIAQITDYDAWRESEEPVTVAEVMATIAANVSVSNRLTLTILDEVHNAVAKGQLKTCKGTMEYSVMTKKEMISEESKKTLSFILPYFS.

Phosphate contacts are provided by residues serine 14, arginine 57–histidine 58, and serine 90–alanine 91. Residue methionine 185 participates in substrate binding. Position 186 (serine 186) interacts with phosphate. Aspartate 209–aspartate 211 is a substrate binding site.

It belongs to the PNP/MTAP phosphorylase family. MTAP subfamily. As to quaternary structure, homotrimer.

It localises to the cytoplasm. It is found in the nucleus. The enzyme catalyses S-methyl-5'-thioadenosine + phosphate = 5-(methylsulfanyl)-alpha-D-ribose 1-phosphate + adenine. It functions in the pathway amino-acid biosynthesis; L-methionine biosynthesis via salvage pathway; S-methyl-5-thio-alpha-D-ribose 1-phosphate from S-methyl-5'-thioadenosine (phosphorylase route): step 1/1. Its function is as follows. Catalyzes the reversible phosphorylation of S-methyl-5'-thioadenosine (MTA) to adenine and 5-methylthioribose-1-phosphate. Involved in the breakdown of MTA, a major by-product of polyamine biosynthesis. Responsible for the first step in the methionine salvage pathway after MTA has been generated from S-adenosylmethionine. Has broad substrate specificity with 6-aminopurine nucleosides as preferred substrates. This chain is S-methyl-5'-thioadenosine phosphorylase 2, found in Puccinia graminis f. sp. tritici (strain CRL 75-36-700-3 / race SCCL) (Black stem rust fungus).